A 210-amino-acid chain; its full sequence is Na(+)-translocating NADH-quinone reductase subunit D (210 aa).

6 helical membrane passes run valine 10–serine 30, leucine 42–isoleucine 62, isoleucine 72–alanine 92, valine 103–methionine 123, phenylalanine 143–phenylalanine 163, and asparagine 178–isoleucine 198.

Belongs to the NqrDE/RnfAE family. As to quaternary structure, composed of six subunits; NqrA, NqrB, NqrC, NqrD, NqrE and NqrF.

The protein resides in the cell inner membrane. The catalysed reaction is a ubiquinone + n Na(+)(in) + NADH + H(+) = a ubiquinol + n Na(+)(out) + NAD(+). In terms of biological role, NQR complex catalyzes the reduction of ubiquinone-1 to ubiquinol by two successive reactions, coupled with the transport of Na(+) ions from the cytoplasm to the periplasm. NqrA to NqrE are probably involved in the second step, the conversion of ubisemiquinone to ubiquinol. The polypeptide is Na(+)-translocating NADH-quinone reductase subunit D (Pseudoalteromonas atlantica (strain T6c / ATCC BAA-1087)).